The chain runs to 142 residues: Large ribosomal subunit protein uL11 (142 aa).

It belongs to the universal ribosomal protein uL11 family. In terms of assembly, part of the ribosomal stalk of the 50S ribosomal subunit. Interacts with L10 and the large rRNA to form the base of the stalk. L10 forms an elongated spine to which L12 dimers bind in a sequential fashion forming a multimeric L10(L12)X complex. One or more lysine residues are methylated.

Functionally, forms part of the ribosomal stalk which helps the ribosome interact with GTP-bound translation factors. The protein is Large ribosomal subunit protein uL11 of Serratia marcescens.